We begin with the raw amino-acid sequence, 186 residues long: Large ribosomal subunit protein uL6 (186 aa).

The protein belongs to the universal ribosomal protein uL6 family. In terms of assembly, part of the 50S ribosomal subunit.

In terms of biological role, this protein binds to the 23S rRNA, and is important in its secondary structure. It is located near the subunit interface in the base of the L7/L12 stalk, and near the tRNA binding site of the peptidyltransferase center. The protein is Large ribosomal subunit protein uL6 of Sulfurisphaera tokodaii (strain DSM 16993 / JCM 10545 / NBRC 100140 / 7) (Sulfolobus tokodaii).